The primary structure comprises 1280 residues: Dynactin subunit 1 (1280 aa).

Positions 1–26 (MAQSKRHMYNRTPSGSRMSTEASARP) are disordered. Residues 11–22 (RTPSGSRMSTEA) show a composition bias toward polar residues. Positions 48–90 (GATLFATGKWVGVILDEAKGKNDGTVQGRKYFTCDEGHGIFVR) constitute a CAP-Gly domain. Positions 99–223 (DGADTTSPET…SKEEEGLRDQ (125 aa)) are disordered. Residues 102–114 (DTTSPETPDSSAS) are compositionally biased toward polar residues. Phosphothreonine is present on residues threonine 108, threonine 145, threonine 146, and threonine 147. The segment covering 129 to 152 (SKLRGLKPKKAPTARKTTTRRPKP) has biased composition (basic residues). Residues 161-205 (AGPSSSLGPSGSASAGELSSSEPSTPAQTPLAAPIIPTPALTSPG) show a composition bias toward low complexity. Residue serine 179 is modified to Phosphoserine; by PLK1. A Phosphoserine; by CDK1 modification is found at serine 212. Residues 214–223 (SKEEEGLRDQ) show a composition bias toward basic and acidic residues. Coiled-coil stretches lie at residues 214–513 (SKEE…ADYQ) and 942–1048 (LKLE…EGLR). The interval 910 to 1280 (EYDAERPPSK…LHQLHGRLIS (371 aa)) is interaction with HPS6. Positions 1064–1089 (GEEQQRGGTPGQAPGALPGPGPVKDS) are disordered. The stretch at 1184–1213 (SAQLMEQVAQLKSLSDTIEKLKDEVLKETV) forms a coiled coil.

This sequence belongs to the dynactin 150 kDa subunit family. As to quaternary structure, monomer and homodimer. Subunit of dynactin, a multiprotein complex part of a tripartite complex with dynein and a adapter, such as BICDL1, BICD2 or HOOK3. The dynactin complex is built around ACTR1A/ACTB filament and consists of an actin-related filament composed of a shoulder domain, a pointed end and a barbed end. Its length is defined by its flexible shoulder domain. The soulder is composed of 2 DCTN1 subunits, 4 DCTN2 and 2 DCTN3. DCTN1/p150(glued) binds directly to microtubules and to cytoplasmic dynein. The 4 DCNT2 (via N-terminus) bind the ACTR1A filament and act as molecular rulers to determine the length. The pointed end is important for binding dynein-dynactin cargo adapters. Consists of 4 subunits: ACTR10, DCNT4, DCTN5 and DCTN6. The barbed end is composed of a CAPZA1:CAPZB heterodimers, which binds ACTR1A/ACTB filament and dynactin and stabilizes dynactin. Interacts with the C-terminus of MAPRE1, MAPRE2 and MAPRE3. Interacts (via C-terminus) with SNX6. Interacts with CLN3, DYNAP, ECPAS and FBXL5. Interacts with MISP; this interaction regulates its distribution at the cell cortex. Interacts with CEP131. Interacts with CEP126. Interacts with CLIP1. Interacts with dynein intermediate chain and dynein heavy chain. Interacts with PLK1 (via POLO-box domain). Interacts with TBCB. Binds preferentially to tyrosinated microtubules than to detyrosinated microtubules. Interacts with PARD6A. Interacts with HPS6. Interacts with KIF3A. Interacts with BICD2. Interacts with DST (isoform 9). Interacts with DST (isoform 1). Identified in a complex with MREG and RILP. Interacts with BCCIP (isoform 2/alpha). Interacts with DCDC1. Interacts with AKNA. Interacts with DYNC1I2. Interacts with RUFY3 and RUFY4. In terms of processing, ubiquitinated by a SCF complex containing FBXL5, leading to its degradation by the proteasome. Post-translationally, phosphorylation by SLK at Thr-145, Thr-146 and Thr-147 targets DCTN1 to the centrosome. It is uncertain if SLK phosphorylates all three threonines or one or two of them. PLK1-mediated phosphorylation at Ser-179 is essential for its localization in the nuclear envelope and promotes its dissociation from microtubules during early mitosis and positively regulates nuclear envelope breakdown during prophase. In terms of tissue distribution, ubiquitous with a high level expression observed in the brain (at protein level).

It is found in the cytoplasm. It localises to the cytoskeleton. The protein localises to the microtubule organizing center. Its subcellular location is the centrosome. The protein resides in the centriole. It is found in the spindle. It localises to the nucleus envelope. The protein localises to the cell cortex. In terms of biological role, part of the dynactin complex that activates the molecular motor dynein for ultra-processive transport along microtubules. Plays a key role in dynein-mediated retrograde transport of vesicles and organelles along microtubules by recruiting and tethering dynein to microtubules. Binds to both dynein and microtubules providing a link between specific cargos, microtubules and dynein. Essential for targeting dynein to microtubule plus ends, recruiting dynein to membranous cargos and enhancing dynein processivity (the ability to move along a microtubule for a long distance without falling off the track). Can also act as a brake to slow the dynein motor during motility along the microtubule. Can regulate microtubule stability by promoting microtubule formation, nucleation and polymerization and by inhibiting microtubule catastrophe in neurons. Inhibits microtubule catastrophe by binding both to microtubules and to tubulin, leading to enhanced microtubule stability along the axon. Plays a role in metaphase spindle orientation. Plays a role in centriole cohesion and subdistal appendage organization and function. Its recruitment to the centriole in a KIF3A-dependent manner is essential for the maintenance of centriole cohesion and the formation of subdistal appendage. Also required for microtubule anchoring at the mother centriole. Plays a role in primary cilia formation. In Rattus norvegicus (Rat), this protein is Dynactin subunit 1 (Dctn1).